We begin with the raw amino-acid sequence, 443 residues long: Probable D-serine dehydratase (443 aa).

The residue at position 106 (lysine 106) is an N6-(pyridoxal phosphate)lysine.

This sequence belongs to the serine/threonine dehydratase family. DsdA subfamily. It depends on pyridoxal 5'-phosphate as a cofactor.

It catalyses the reaction D-serine = pyruvate + NH4(+). The polypeptide is Probable D-serine dehydratase (Cupriavidus pinatubonensis (strain JMP 134 / LMG 1197) (Cupriavidus necator (strain JMP 134))).